The sequence spans 255 residues: Electron transfer flavoprotein subunit beta (255 aa).

A2 bears the N-acetylalanine mark. AMP contacts are provided by residues A9, 39–42 (NPFC), C66, and 123–134 (GKQAIDDDCNQT). Positions 183 to 205 (ADLRLNEPRYATLPNIMKAKKKK) are recognition loop. Residue K200 is modified to N6,N6,N6-trimethyllysine; by ETFBKMT; alternate. K200 carries the post-translational modification N6-acetyllysine; alternate. N6-methyllysine; alternate is present on K200. K203 is subject to N6,N6,N6-trimethyllysine; by ETFBKMT. K210 carries the N6-acetyllysine; alternate modification. K210 is modified (N6-succinyllysine; alternate). S223 and S226 each carry phosphoserine. An N6-acetyllysine modification is found at K238. K248 is subject to N6-acetyllysine; alternate. K248 is modified (N6-succinyllysine; alternate).

It belongs to the ETF beta-subunit/FixA family. In terms of assembly, heterodimer composed of ETFA and ETFB. Identified in a complex that contains ETFA, ETFB and ETFRF1. Interacts with ACADM. Methylated. Trimethylation at Lys-200 and Lys-203 may negatively regulate the activity in electron transfer from acyl-CoA dehydrogenases.

The protein localises to the mitochondrion matrix. In terms of biological role, heterodimeric electron transfer flavoprotein that accepts electrons from several mitochondrial dehydrogenases, including acyl-CoA dehydrogenases, glutaryl-CoA and sarcosine dehydrogenase. It transfers the electrons to the main mitochondrial respiratory chain via ETF-ubiquinone oxidoreductase. Required for normal mitochondrial fatty acid oxidation and normal amino acid metabolism. ETFB binds an AMP molecule that probably has a purely structural role. This Bos taurus (Bovine) protein is Electron transfer flavoprotein subunit beta.